Consider the following 428-residue polypeptide: Adenylosuccinate synthetase (428 aa).

Residues 12–18 and 40–42 contribute to the GTP site; these read GDEGKGK and GHT. Catalysis depends on Asp-13, which acts as the Proton acceptor. Residues Asp-13 and Gly-40 each coordinate Mg(2+). Residues 13-16, 38-41, Thr-129, Arg-143, Gln-224, Thr-239, and Arg-303 each bind IMP; these read DEGK and NAGH. The active-site Proton donor is His-41. 299–305 lines the substrate pocket; the sequence is VTTGRIR. GTP-binding positions include Arg-305, 331 to 333, and 410 to 412; these read KVD and AYG.

The protein belongs to the adenylosuccinate synthetase family. Homodimer. Requires Mg(2+) as cofactor.

It is found in the cytoplasm. It carries out the reaction IMP + L-aspartate + GTP = N(6)-(1,2-dicarboxyethyl)-AMP + GDP + phosphate + 2 H(+). Its pathway is purine metabolism; AMP biosynthesis via de novo pathway; AMP from IMP: step 1/2. In terms of biological role, plays an important role in the de novo pathway of purine nucleotide biosynthesis. Catalyzes the first committed step in the biosynthesis of AMP from IMP. This Francisella tularensis subsp. mediasiatica (strain FSC147) protein is Adenylosuccinate synthetase.